Here is a 60-residue protein sequence, read N- to C-terminus: Large ribosomal subunit protein bL32 (60 aa).

Belongs to the bacterial ribosomal protein bL32 family.

The chain is Large ribosomal subunit protein bL32 from Azotobacter vinelandii (strain DJ / ATCC BAA-1303).